We begin with the raw amino-acid sequence, 115 residues long: Phosphoribosyl-ATP pyrophosphatase (115 aa).

The protein belongs to the PRA-PH family.

It localises to the cytoplasm. It carries out the reaction 1-(5-phospho-beta-D-ribosyl)-ATP + H2O = 1-(5-phospho-beta-D-ribosyl)-5'-AMP + diphosphate + H(+). The protein operates within amino-acid biosynthesis; L-histidine biosynthesis; L-histidine from 5-phospho-alpha-D-ribose 1-diphosphate: step 2/9. The chain is Phosphoribosyl-ATP pyrophosphatase from Bordetella parapertussis (strain 12822 / ATCC BAA-587 / NCTC 13253).